A 403-amino-acid chain; its full sequence is LIM/homeobox protein Lhx1 (403 aa).

LIM zinc-binding domains follow at residues 4–54 and 63–117; these read CAGC…CKND and CAGC…CKED. The segment covering 131 to 147 has biased composition (polar residues); that stretch reads ISVTGSDPSLSPESQDP. Disordered stretches follow at residues 131–185 and 318–366; these read ISVT…PRTT and PAGT…SMHS. The segment covering 150-166 has biased composition (basic and acidic residues); the sequence is DDAKDSESANVSDKEAG. Positions 179-238 form a DNA-binding region, homeobox; sequence RRGPRTTIKAKQLETLKAAFAATPKPTRHIREQLAQETGLNMRVIQVWFQNRRSKERRMK.

As to quaternary structure, interacts with ldb1 via the tandem LIM domains. Both LIM domains are required for optimal binding and binding relieves the inhibitory effect of the LIM domains and activates lhx1. Binding to ldb1 also prevents degradation of ldb1 by rnf12. The stoichiometry of lhx1 and ldb1 is important for their function and an excess of ldb1 can inhibit lhx1 function. Interacts with the N-terminal region of rnf12 by a homeobox-dependent mechanism. As to expression, exhibits a biphasic expression pattern. Initially localized to the Spemann organizer region of gastrulae, leading to expression in prechordal mesoderm and notochord. In the second phase, expressed in the lateral mesoderm and neural plate, eventually concentrating in the pronephros and the CNS. Expressed in the pronephros primordium by late gastrula (stage 12.5) and becomes restricted to the tips of the tubules and ducts as kidney development progresses. In the CNS, becomes progressively recognizable in anatomically distinct structures during larval development. Within the forebrain, shows almost identical expression to lhx5 in the diencephalon, being expressed in alternating stripes to lhx2 and lhx9. Expressed in the diencephalic pretectum within prosomere 1, hypothalamus, ventral thalamus and zona limitans intrathalamica. In the telencephalon, the expression pattern is distinct from lhx5, being localized in the pallium and subpallium. Also expressed in the ventral territories of midbrain (mesencephalon) and hindbrain (rhombencephalon), being expressed in the mesencephalic tegmentum and hindbrain reticular formation. Also shows intense expression in the cerebellum including Purkinje cells.

The protein localises to the nucleus. Functionally, involved in the establishment of the body plan via the Spemann organizer during gastrulation. Transcriptional activator required to induce organizer gene expression downstream of siamois. Promotes head formation by binding to 5'-TAAT'-3' elements in the promoters of head organizer genes cer1 and gsc to stimulate expression. Binds as a complex with siamois and mix-A/mix.1 to the cer1 promoter, and with ldb1 and otx2 to the gsc promoter. Also involved in neural induction via the organizer, including a role in notochord formation. Acts synergistically with ldb1 and ssbp in subsequent axis formation. Involved in kidney development, acting synergistically with pax8 to establish the pronephric primordium in late gastrulae/early neurulae and with pax2 during pronephric morphogenesis in tailbud stages. Has a later role in mediating the activity of inhibitors of ventralization. This is LIM/homeobox protein Lhx1 (lhx1) from Xenopus laevis (African clawed frog).